The sequence spans 103 residues: Pyrimidine/purine nucleoside phosphorylase (103 aa).

Belongs to the nucleoside phosphorylase PpnP family.

The catalysed reaction is a purine D-ribonucleoside + phosphate = a purine nucleobase + alpha-D-ribose 1-phosphate. It catalyses the reaction adenosine + phosphate = alpha-D-ribose 1-phosphate + adenine. It carries out the reaction cytidine + phosphate = cytosine + alpha-D-ribose 1-phosphate. The enzyme catalyses guanosine + phosphate = alpha-D-ribose 1-phosphate + guanine. The catalysed reaction is inosine + phosphate = alpha-D-ribose 1-phosphate + hypoxanthine. It catalyses the reaction thymidine + phosphate = 2-deoxy-alpha-D-ribose 1-phosphate + thymine. It carries out the reaction uridine + phosphate = alpha-D-ribose 1-phosphate + uracil. The enzyme catalyses xanthosine + phosphate = alpha-D-ribose 1-phosphate + xanthine. Functionally, catalyzes the phosphorolysis of diverse nucleosides, yielding D-ribose 1-phosphate and the respective free bases. Can use uridine, adenosine, guanosine, cytidine, thymidine, inosine and xanthosine as substrates. Also catalyzes the reverse reactions. The polypeptide is Pyrimidine/purine nucleoside phosphorylase (Sulfurovum sp. (strain NBC37-1)).